The primary structure comprises 261 residues: Transmembrane protein 106A (261 aa).

A helical transmembrane segment spans residues 95–115; that stretch reads VFLAVSICLVTSSLIIFFLFP.

It belongs to the TMEM106 family.

It localises to the cell membrane. Its function is as follows. Activates macrophages and polarizes them into M1-like macrophages through the activation of the MAPK and NF-kappaB signaling pathway. Upon activation, up-regulates the expression of CD80, CD86, CD69 and MHC II on macrophages, and induces the release of pro-inflammatory cytokines such as TNF, IL1B, IL6, CCL2 and nitric oxide. May play a role in inhibition of proliferation and migration. The chain is Transmembrane protein 106A (TMEM106A) from Bos taurus (Bovine).